A 323-amino-acid polypeptide reads, in one-letter code: Lipoyl synthase (323 aa).

[4Fe-4S] cluster-binding residues include Cys-56, Cys-61, Cys-67, Cys-82, Cys-86, Cys-89, and Ser-293. The Radical SAM core domain occupies 68–282; it reads WEDREATFLI…AAEARELGFA (215 aa).

Belongs to the radical SAM superfamily. Lipoyl synthase family. It depends on [4Fe-4S] cluster as a cofactor.

It is found in the cytoplasm. It carries out the reaction [[Fe-S] cluster scaffold protein carrying a second [4Fe-4S](2+) cluster] + N(6)-octanoyl-L-lysyl-[protein] + 2 oxidized [2Fe-2S]-[ferredoxin] + 2 S-adenosyl-L-methionine + 4 H(+) = [[Fe-S] cluster scaffold protein] + N(6)-[(R)-dihydrolipoyl]-L-lysyl-[protein] + 4 Fe(3+) + 2 hydrogen sulfide + 2 5'-deoxyadenosine + 2 L-methionine + 2 reduced [2Fe-2S]-[ferredoxin]. It participates in protein modification; protein lipoylation via endogenous pathway; protein N(6)-(lipoyl)lysine from octanoyl-[acyl-carrier-protein]: step 2/2. In terms of biological role, catalyzes the radical-mediated insertion of two sulfur atoms into the C-6 and C-8 positions of the octanoyl moiety bound to the lipoyl domains of lipoate-dependent enzymes, thereby converting the octanoylated domains into lipoylated derivatives. The sequence is that of Lipoyl synthase from Acidothermus cellulolyticus (strain ATCC 43068 / DSM 8971 / 11B).